The primary structure comprises 555 residues: Formate--tetrahydrofolate ligase (555 aa).

Residue 64 to 71 (TKAGIGKT) participates in ATP binding.

Belongs to the formate--tetrahydrofolate ligase family.

It carries out the reaction (6S)-5,6,7,8-tetrahydrofolate + formate + ATP = (6R)-10-formyltetrahydrofolate + ADP + phosphate. The protein operates within one-carbon metabolism; tetrahydrofolate interconversion. In Phocaeicola vulgatus (strain ATCC 8482 / DSM 1447 / JCM 5826 / CCUG 4940 / NBRC 14291 / NCTC 11154) (Bacteroides vulgatus), this protein is Formate--tetrahydrofolate ligase.